The primary structure comprises 1495 residues: Ras GTPase-activating-like protein IQG1 (1495 aa).

In terms of domain architecture, Calponin-homology (CH) spans 108–221 (LCRVSEVKIW…ILISMINKKW (114 aa)). Threonine 264 is modified (phosphothreonine). Residue serine 268 is modified to Phosphoserine. Threonine 299 bears the Phosphothreonine mark. IQ domains lie at 447 to 467 (EQDI…VLSS), 538 to 567 (SHYP…KLND), 568 to 597 (ERES…AVHD), 599 to 628 (HKEN…SLGK), 629 to 658 (ENCN…PENN), 687 to 716 (EYNN…FYKR), and 717 to 746 (NVRS…CPNP). A coiled-coil region spans residues 759–798 (NGTATIEEVQNQLESCQASLDSENMKKERLLKSIRQQLNI). A Ras-GAP domain is found at 876-1100 (SYFTRFVCEM…PHIKDVLYNV (225 aa)).

As to quaternary structure, interacts with AFR1. Interacts with AKR1. Interacts with activated CDC42. Interacts with calmodulin CMD1. Interacts with myosin MYO1 and its light chain MLC1. Interacts with BUD4. Interacts with INN1. Interacts with SEC3. Interacts with TEM1.

It localises to the bud neck. Required for the assembly and the contraction of the actomyosin ring at the bud neck during cytokinesis. Seems to be involved in additional tasks during cell division like axial bud-site selection and targeted secretion by recruiting the spatial landmark BUD4, the septin CDC12 and the secretion landmark SEC3 to the bud neck. May be regulated by calcium ions. The chain is Ras GTPase-activating-like protein IQG1 (IQG1) from Saccharomyces cerevisiae (strain ATCC 204508 / S288c) (Baker's yeast).